Here is a 160-residue protein sequence, read N- to C-terminus: Major pollen allergen Bet v 1-A (160 aa).

Residues lysine 55, tyrosine 82, tyrosine 84, and asparagine 101 each contribute to the brassinolide site.

Belongs to the BetVI family.

It is found in the cytoplasm. In terms of biological role, may be a general steroid carrier protein. The chain is Major pollen allergen Bet v 1-A (BETVIA) from Betula pendula (European white birch).